Reading from the N-terminus, the 226-residue chain is MGDTGSERSNAPSLPPRCPCGFWGSSKTMNLCSKCFADFQKKQPDEDTAPSTSSSQSDLFPSETDSDNGNTSIPTPTVNPTQQLPTELNVDSPSKEDCGPCTDSAHVSLTTPSKRSCDSDSQSEDDTSPMKRPRLLDSGDRPDNSSRSKQKSRRRCFRCQIKLELVQQELGSCRCGYVFCMLHRLPEQHDCTFDHMGRGREEAIMKMVKLDRKVGRSCQRIGEGCS.

The A20-type zinc finger occupies 12 to 44; that stretch reads PSLPPRCPCGFWGSSKTMNLCSKCFADFQKKQP. Zn(2+) is bound by residues Cys18, Cys20, Cys32, and Cys35. The interval 42–149 is disordered; sequence KQPDEDTAPS…DRPDNSSRSK (108 aa). Composition is skewed to polar residues over residues 49 to 59, 67 to 92, and 105 to 114; these read APSTSSSQSDL, DNGNTSIPTPTVNPTQQLPTELNVDS, and AHVSLTTPSK. Over residues 134–146 the composition is skewed to basic and acidic residues; the sequence is RLLDSGDRPDNSS. An AN1-type zinc finger spans residues 150 to 199; sequence QKSRRRCFRCQIKLELVQQELGSCRCGYVFCMLHRLPEQHDCTFDHMGRG. Zn(2+) contacts are provided by Cys156, Cys159, Cys173, Cys175, Cys180, His183, His189, and Cys191.

The protein is AN1-type zinc finger protein 3 homolog (zfand3) of Xenopus laevis (African clawed frog).